We begin with the raw amino-acid sequence, 251 residues long: Ubiquinone/menaquinone biosynthesis C-methyltransferase UbiE (251 aa).

Residues threonine 74, aspartate 95, and 123 to 124 (NA) each bind S-adenosyl-L-methionine.

This sequence belongs to the class I-like SAM-binding methyltransferase superfamily. MenG/UbiE family.

It carries out the reaction a 2-demethylmenaquinol + S-adenosyl-L-methionine = a menaquinol + S-adenosyl-L-homocysteine + H(+). It catalyses the reaction a 2-methoxy-6-(all-trans-polyprenyl)benzene-1,4-diol + S-adenosyl-L-methionine = a 5-methoxy-2-methyl-3-(all-trans-polyprenyl)benzene-1,4-diol + S-adenosyl-L-homocysteine + H(+). It functions in the pathway quinol/quinone metabolism; menaquinone biosynthesis; menaquinol from 1,4-dihydroxy-2-naphthoate: step 2/2. The protein operates within cofactor biosynthesis; ubiquinone biosynthesis. Functionally, methyltransferase required for the conversion of demethylmenaquinol (DMKH2) to menaquinol (MKH2) and the conversion of 2-polyprenyl-6-methoxy-1,4-benzoquinol (DDMQH2) to 2-polyprenyl-3-methyl-6-methoxy-1,4-benzoquinol (DMQH2). The polypeptide is Ubiquinone/menaquinone biosynthesis C-methyltransferase UbiE (Shewanella baltica (strain OS155 / ATCC BAA-1091)).